We begin with the raw amino-acid sequence, 194 residues long: Lectin-C (194 aa).

A signal peptide spans 1-26 (MKRSNSIAVMLVLVLSSLMLLLPVEG). A propeptide spans 27 to 44 (QGHEGHGVGEILLMGKLG) (removed in mature form). 3 Chitin-binding type-1 domains span residues 45-86 (APVC…QCDY), 87-127 (NRCG…QCSY), and 128-168 (WRCG…QCDL). Disulfide bonds link C48–C63, C57–C69, C62–C76, C80–C84, C89–C104, C98–C110, C103–C117, C121–C125, C130–C145, C139–C151, C144–C158, and C162–C166. The propeptide at 171-194 (LLPSPLRRIIAIRKLKANLANMLS) is removed in mature form.

In terms of assembly, homodimer. The homodimers are asymmetric; formed in a 'head-to-tail' fashion via hydrophobic interactions between aromatic residues of the carbohydrate-binding sites of each subunit.

N-acetyl-D-glucosamine binding lectin. Almost no hemagglutinating activity towards human erythrocytes. Low mitogenic activity towards human peripheral blood lymphocytes. In Phytolacca americana (American pokeweed), this protein is Lectin-C.